The following is an 860-amino-acid chain: Leucine--tRNA ligase (860 aa).

Residues 42–52 (PYPSGRLHMGH) carry the 'HIGH' region motif. A 'KMSKS' region motif is present at residues 619–623 (KMSKS). Lys622 is a binding site for ATP.

Belongs to the class-I aminoacyl-tRNA synthetase family.

It localises to the cytoplasm. The catalysed reaction is tRNA(Leu) + L-leucine + ATP = L-leucyl-tRNA(Leu) + AMP + diphosphate. This chain is Leucine--tRNA ligase, found in Proteus mirabilis (strain HI4320).